Here is a 186-residue protein sequence, read N- to C-terminus: MDITITPLASSTLWSADITPTTCSENLLDWLLDQNSLTRKLQALSADFKVKVRQQVTLSHSKDLLSPYFSEENKVLVREVLLVCDNKPVVFAQTEIPFSTLTDQQAKLAEIGTDSLGTFLFQDPSMRRDKIEVAQFPVYSAVHQLCIDLNQEVDFPLWGRRSLFYVNNKPLLVSEVFLPASGIYLP.

Substrate is bound by residues Arg-78, Leu-116, and Glu-175.

This sequence belongs to the UbiC family.

It is found in the cytoplasm. It catalyses the reaction chorismate = 4-hydroxybenzoate + pyruvate. The protein operates within cofactor biosynthesis; ubiquinone biosynthesis. In terms of biological role, removes the pyruvyl group from chorismate, with concomitant aromatization of the ring, to provide 4-hydroxybenzoate (4HB) for the ubiquinone pathway. The sequence is that of Probable chorismate pyruvate-lyase from Psychromonas ingrahamii (strain DSM 17664 / CCUG 51855 / 37).